We begin with the raw amino-acid sequence, 515 residues long: Putative asparagine synthetase [glutamine-hydrolyzing] 2 (515 aa).

Residue cysteine 2 is the For GATase activity of the active site. A Glutamine amidotransferase type-2 domain is found at 2–229 (CGINGIIRFG…ARQNLIFDLD (228 aa)). Residues 52-56 (RLAIL), 92-94 (NGE), and aspartate 114 each bind L-glutamine. Residues isoleucine 306 and 378–379 (SG) contribute to the ATP site.

Belongs to the asparagine synthetase family.

The enzyme catalyses L-aspartate + L-glutamine + ATP + H2O = L-asparagine + L-glutamate + AMP + diphosphate + H(+). It functions in the pathway amino-acid biosynthesis; L-asparagine biosynthesis; L-asparagine from L-aspartate (L-Gln route): step 1/1. This chain is Putative asparagine synthetase [glutamine-hydrolyzing] 2, found in Methanocaldococcus jannaschii (strain ATCC 43067 / DSM 2661 / JAL-1 / JCM 10045 / NBRC 100440) (Methanococcus jannaschii).